Consider the following 655-residue polypeptide: MQSARMTPSVGRQLLRLGARSSRSAALQGQPRPTSAQRLYASEATQAVLEKPETLSSDASTREKPARAESKSFAVGMFKGQLTTDQVFPYPSVLNEGQTQFLKELVGPVARFFEEVNDPAKNDSLEKVEEDTLQGLKELGAFGLQVPSELGGLGLSNTQYARLAEIVGMHDLGVSVTLGAHQSIGFKGILLYGTKAQKEKYLPRVASGQALAAFCLTEPSSGSDVASIRSSAVPSPCGKYYTLNGSKIWISNGGLADIFTVFAKTPIKDAATGAVKEKITAFVVERSFGGVTHGLPEKKMGIKASNTSEVYFDGVKVPAENVLGEVGDGFKVAVNILNNGRFGMAATLAGTMKAIIAKAVDHATNRTQFGDKIHNFGVIQEKLARMAILQYVTESMAYMLSANMDQGFKDFQIEAAISKIFGSEAAWKVTDECIQIMGGMGFMKEPGVERVLRDIRIFRIFEGTNDILRLFVALQGCMDKGKELTGLGNALKNPLGNVGLLIGEASKQLRRRTGIGSGLSLSGIVHPELSRSGELAVQALEQFATVVEAKLMKHKKGIVNEQFLLQRLADGAIDLYAMVVVLSRASRSLSEGYPTAQHEKMLCDSWCIEAATRIRENMASLQSNPQQQELFRNFRSISKAMVENGGLVTSNPLRV.

The N-terminal 40 residues, 1–40 (MQSARMTPSVGRQLLRLGARSSRSAALQGQPRPTSAQRLY), are a transit peptide targeting the mitochondrion. Residues 1–70 (MQSARMTPSV…TREKPARAES (70 aa)) are disordered. A compositionally biased stretch (polar residues) spans 21-37 (SSRSAALQGQPRPTSAQ). Positions 41–482 (ASEATQAVLE…ALQGCMDKGK (442 aa)) are catalytic. Position 51 is an N6-acetyllysine (Lys51). Over residues 60–70 (STREKPARAES) the composition is skewed to basic and acidic residues. N6-acetyllysine; alternate occurs at positions 71 and 127. Residues Lys71 and Lys127 each carry the N6-succinyllysine; alternate modification. Lys195 bears the N6-succinyllysine mark. Position 214–223 (214–223 (FCLTEPSSGS)) interacts with FAD. An S-nitrosocysteine modification is found at Cys237. N6-acetyllysine; alternate is present on Lys239. The residue at position 239 (Lys239) is an N6-succinyllysine; alternate. 249–251 (WIS) lines the FAD pocket. Lys268 is modified (N6-succinyllysine). 2 positions are modified to N6-acetyllysine; alternate: Lys276 and Lys278. Residues Lys276 and Lys278 each carry the N6-succinyllysine; alternate modification. N6-acetyllysine is present on residues Lys298 and Lys316. Lys331 carries the post-translational modification N6-acetyllysine; alternate. Lys331 is modified (N6-succinyllysine; alternate). At Lys372 the chain carries N6-succinyllysine. Substrate is bound at residue 461 to 463 (FEG). The active-site Proton acceptor is the Glu462. 464–466 (TND) contacts FAD. Residue Lys482 is modified to N6-acetyllysine; alternate. An N6-succinyllysine; alternate modification is found at Lys482. The interval 483–516 (ELTGLGNALKNPLGNVGLLIGEASKQLRRRTGIG) is membrane-anchoring. Residues Ser517 and Ser522 each carry the phosphoserine modification. Residue Lys550 is modified to N6-acetyllysine. Residue Lys556 is modified to N6-acetyllysine; alternate. Lys556 carries the post-translational modification N6-succinyllysine; alternate. Gln562 lines the FAD pocket. N6-succinyllysine is present on Lys639.

It belongs to the acyl-CoA dehydrogenase family. Homodimer. Homodimerizes after import into the mitochondrion. The cofactor is FAD. In terms of processing, S-nitrosylation at Cys-237 in liver improves catalytic efficiency. Widely expressed (at protein level).

It localises to the mitochondrion inner membrane. It catalyses the reaction a very-long-chain 2,3-saturated fatty acyl-CoA + oxidized [electron-transfer flavoprotein] + H(+) = a very-long-chain (2E)-enoyl-CoA + reduced [electron-transfer flavoprotein]. It carries out the reaction dodecanoyl-CoA + oxidized [electron-transfer flavoprotein] + H(+) = (2E)-dodecenoyl-CoA + reduced [electron-transfer flavoprotein]. The enzyme catalyses tetradecanoyl-CoA + oxidized [electron-transfer flavoprotein] + H(+) = (2E)-tetradecenoyl-CoA + reduced [electron-transfer flavoprotein]. The catalysed reaction is oxidized [electron-transfer flavoprotein] + hexadecanoyl-CoA + H(+) = (2E)-hexadecenoyl-CoA + reduced [electron-transfer flavoprotein]. It catalyses the reaction octadecanoyl-CoA + oxidized [electron-transfer flavoprotein] + H(+) = (2E)-octadecenoyl-CoA + reduced [electron-transfer flavoprotein]. It carries out the reaction eicosanoyl-CoA + oxidized [electron-transfer flavoprotein] + H(+) = (2E)-eicosenoyl-CoA + reduced [electron-transfer flavoprotein]. The enzyme catalyses docosanoyl-CoA + oxidized [electron-transfer flavoprotein] + H(+) = (2E)-docosenoyl-CoA + reduced [electron-transfer flavoprotein]. The catalysed reaction is tetracosanoyl-CoA + oxidized [electron-transfer flavoprotein] + H(+) = (2E)-tetracosenoyl-CoA + reduced [electron-transfer flavoprotein]. Its pathway is lipid metabolism; mitochondrial fatty acid beta-oxidation. Very long-chain specific acyl-CoA dehydrogenase is one of the acyl-CoA dehydrogenases that catalyze the first step of mitochondrial fatty acid beta-oxidation, an aerobic process breaking down fatty acids into acetyl-CoA and allowing the production of energy from fats. The first step of fatty acid beta-oxidation consists in the removal of one hydrogen from C-2 and C-3 of the straight-chain fatty acyl-CoA thioester, resulting in the formation of trans-2-enoyl-CoA. Among the different mitochondrial acyl-CoA dehydrogenases, very long-chain specific acyl-CoA dehydrogenase acts specifically on acyl-CoAs with saturated 12 to 24 carbons long primary chains. The chain is Very long-chain specific acyl-CoA dehydrogenase, mitochondrial from Rattus norvegicus (Rat).